Consider the following 448-residue polypeptide: Carbamoyl phosphate synthase arginine-specific small chain (448 aa).

The transit peptide at 1–27 (MFKNIARLASMARSAPRTTASFQTRFM) directs the protein to the mitochondrion. Residues 224 to 415 (HIAVIDCGVK…LGQVHQYRAA (192 aa)) form the Glutamine amidotransferase type-1 domain. The Nucleophile role is filled by cysteine 304. Active-site residues include histidine 388 and glutamate 390.

It belongs to the CarA family. In terms of assembly, heterodimer composed of 2 chains; the small (or glutamine) chain promotes the hydrolysis of glutamine to ammonia, which is used by the large (or ammonia) chain to synthesize carbamoyl phosphate.

Its subcellular location is the mitochondrion matrix. It catalyses the reaction hydrogencarbonate + L-glutamine + 2 ATP + H2O = carbamoyl phosphate + L-glutamate + 2 ADP + phosphate + 2 H(+). The catalysed reaction is L-glutamine + H2O = L-glutamate + NH4(+). It participates in amino-acid biosynthesis; L-arginine biosynthesis; carbamoyl phosphate from bicarbonate: step 1/1. Small subunit of the arginine-specific carbamoyl phosphate synthase (CPSase). CPSase catalyzes the formation of carbamoyl phosphate from the ammonia moiety of glutamine, carbonate, and phosphate donated by ATP, the first step of the arginine biosynthetic pathway. The small subunit (glutamine amidotransferase) binds and cleaves glutamine to supply the large subunit with the substrate ammonia. The chain is Carbamoyl phosphate synthase arginine-specific small chain (CPA1) from Yarrowia lipolytica (strain CLIB 122 / E 150) (Yeast).